Consider the following 375-residue polypeptide: Coproporphyrin III ferrochelatase (375 aa).

The Fe-coproporphyrin III site is built by Ser-59 and Tyr-128. Fe(2+) is bound by residues His-191 and Glu-286.

Belongs to the ferrochelatase family.

It is found in the cytoplasm. It carries out the reaction Fe-coproporphyrin III + 2 H(+) = coproporphyrin III + Fe(2+). It functions in the pathway porphyrin-containing compound metabolism; protoheme biosynthesis. In terms of biological role, involved in coproporphyrin-dependent heme b biosynthesis. Catalyzes the insertion of ferrous iron into coproporphyrin III to form Fe-coproporphyrin III. The polypeptide is Coproporphyrin III ferrochelatase (Streptomyces coelicolor (strain ATCC BAA-471 / A3(2) / M145)).